The following is a 59-amino-acid chain: Cecropin-A1 (59 aa).

Positions 1–23 (MNFTKLFAIVLLAALVLLGQTEA) are cleaved as a signal peptide.

The protein belongs to the cecropin family.

It localises to the secreted. Functionally, cecropins have lytic and antibacterial activity against several Gram-positive and Gram-negative bacteria. The polypeptide is Cecropin-A1 (CECA1) (Aedes albopictus (Asian tiger mosquito)).